Here is a 521-residue protein sequence, read N- to C-terminus: Two-component response regulator ARR11 (521 aa).

In terms of domain architecture, Response regulatory spans 12–127; sequence RVLVVDDDPT…ELKIIWQHVL (116 aa). The residue at position 63 (Asp-63) is a 4-aspartylphosphate. Residues 192–195 carry the Nuclear localization signal motif; that stretch reads KKAR. A DNA-binding region (myb-like GARP) is located at residues 195-246; sequence RVVWSFELHHKFVNAVNQIGCDHKAGPKKILDLMNVPWLTRENVASHLQKYR.

The protein belongs to the ARR family. Type-B subfamily. Binds the target DNA as a monomer. Post-translationally, two-component system major event consists of a His-to-Asp phosphorelay between a sensor histidine kinase (HK) and a response regulator (RR). In plants, the His-to-Asp phosphorelay involves an additional intermediate named Histidine-containing phosphotransfer protein (HPt). This multistep phosphorelay consists of a His-Asp-His-Asp sequential transfer of a phosphate group between first a His and an Asp of the HK protein, followed by the transfer to a conserved His of the HPt protein and finally the transfer to an Asp in the receiver domain of the RR protein. In terms of tissue distribution, detected in the whole plant. Predominantly expressed in roots and stems.

It localises to the nucleus. Its function is as follows. Transcriptional activator that binds specifically to the DNA sequence 5'-[AG]GATT-3'. Functions as a response regulator involved in His-to-Asp phosphorelay signal transduction system. Phosphorylation of the Asp residue in the receiver domain activates the ability of the protein to promote the transcription of target genes. Could directly activate some type-A response regulators in response to cytokinins. The sequence is that of Two-component response regulator ARR11 (ARR11) from Arabidopsis thaliana (Mouse-ear cress).